The following is a 163-amino-acid chain: 3-dehydroquinate dehydratase (163 aa).

The active-site Proton acceptor is the Tyr-28. Asn-80, His-86, and Asp-93 together coordinate substrate. His-106 serves as the catalytic Proton donor. Substrate is bound by residues 107-108 and Arg-117; that span reads IS.

This sequence belongs to the type-II 3-dehydroquinase family. Homododecamer.

It catalyses the reaction 3-dehydroquinate = 3-dehydroshikimate + H2O. It participates in metabolic intermediate biosynthesis; chorismate biosynthesis; chorismate from D-erythrose 4-phosphate and phosphoenolpyruvate: step 3/7. Its function is as follows. Catalyzes a trans-dehydration via an enolate intermediate. In Bradyrhizobium sp. (strain BTAi1 / ATCC BAA-1182), this protein is 3-dehydroquinate dehydratase.